The sequence spans 484 residues: Probable cytochrome P450 508A1 (484 aa).

The helical transmembrane segment at Met1–Ser21 threads the bilayer. Residue Cys428 coordinates heme.

The protein belongs to the cytochrome P450 family. The cofactor is heme.

It localises to the membrane. The protein is Probable cytochrome P450 508A1 (cyp508A1-1) of Dictyostelium discoideum (Social amoeba).